The chain runs to 203 residues: Outer-membrane lipoprotein carrier protein (203 aa).

Residues Met-1–Ala-21 form the signal peptide.

This sequence belongs to the LolA family. As to quaternary structure, monomer.

It is found in the periplasm. Participates in the translocation of lipoproteins from the inner membrane to the outer membrane. Only forms a complex with a lipoprotein if the residue after the N-terminal Cys is not an aspartate (The Asp acts as a targeting signal to indicate that the lipoprotein should stay in the inner membrane). In Klebsiella pneumoniae subsp. pneumoniae (strain ATCC 700721 / MGH 78578), this protein is Outer-membrane lipoprotein carrier protein.